Consider the following 244-residue polypeptide: tRNA pseudouridine synthase A (244 aa).

D52 functions as the Nucleophile in the catalytic mechanism. Position 110 (Y110) interacts with substrate.

Belongs to the tRNA pseudouridine synthase TruA family. Homodimer.

The enzyme catalyses uridine(38/39/40) in tRNA = pseudouridine(38/39/40) in tRNA. Functionally, formation of pseudouridine at positions 38, 39 and 40 in the anticodon stem and loop of transfer RNAs. In Pelobacter propionicus (strain DSM 2379 / NBRC 103807 / OttBd1), this protein is tRNA pseudouridine synthase A.